A 305-amino-acid chain; its full sequence is Aspartate carbamoyltransferase catalytic subunit (305 aa).

Residues arginine 60 and threonine 61 each contribute to the carbamoyl phosphate site. Position 88 (lysine 88) interacts with L-aspartate. Carbamoyl phosphate is bound by residues arginine 110, histidine 138, and glutamine 141. 2 residues coordinate L-aspartate: arginine 171 and arginine 222. Positions 263 and 264 each coordinate carbamoyl phosphate.

This sequence belongs to the aspartate/ornithine carbamoyltransferase superfamily. ATCase family. In terms of assembly, heterododecamer (2C3:3R2) of six catalytic PyrB chains organized as two trimers (C3), and six regulatory PyrI chains organized as three dimers (R2).

The catalysed reaction is carbamoyl phosphate + L-aspartate = N-carbamoyl-L-aspartate + phosphate + H(+). It functions in the pathway pyrimidine metabolism; UMP biosynthesis via de novo pathway; (S)-dihydroorotate from bicarbonate: step 2/3. Catalyzes the condensation of carbamoyl phosphate and aspartate to form carbamoyl aspartate and inorganic phosphate, the committed step in the de novo pyrimidine nucleotide biosynthesis pathway. The polypeptide is Aspartate carbamoyltransferase catalytic subunit (Halalkalibacterium halodurans (strain ATCC BAA-125 / DSM 18197 / FERM 7344 / JCM 9153 / C-125) (Bacillus halodurans)).